Consider the following 132-residue polypeptide: Small ribosomal subunit protein uS8 (132 aa).

Belongs to the universal ribosomal protein uS8 family. Part of the 30S ribosomal subunit. Contacts proteins S5 and S12.

Functionally, one of the primary rRNA binding proteins, it binds directly to 16S rRNA central domain where it helps coordinate assembly of the platform of the 30S subunit. This chain is Small ribosomal subunit protein uS8, found in Halalkalibacterium halodurans (strain ATCC BAA-125 / DSM 18197 / FERM 7344 / JCM 9153 / C-125) (Bacillus halodurans).